The chain runs to 301 residues: Ribonuclease H2 subunit A (301 aa).

Methionine 1 bears the N-acetylmethionine mark. One can recognise an RNase H type-2 domain in the interval 28–251; that stretch reads PCVLGVDEAG…AQAILEKEAE (224 aa). The a divalent metal cation site is built by aspartate 34, glutamate 35, and aspartate 142. Threonine 217 bears the Phosphothreonine mark. Serine 258 is subject to Phosphoserine.

It belongs to the RNase HII family. Eukaryotic subfamily. The RNase H2 complex is a heterotrimer composed of the catalytic subunit RNASEH2A and the non-catalytic subunits RNASEH2B and RNASEH2C. Mn(2+) is required as a cofactor. Requires Mg(2+) as cofactor.

It localises to the nucleus. It catalyses the reaction Endonucleolytic cleavage to 5'-phosphomonoester.. In terms of biological role, catalytic subunit of RNase HII, an endonuclease that specifically degrades the RNA of RNA:DNA hybrids. Participates in DNA replication, possibly by mediating the removal of lagging-strand Okazaki fragment RNA primers during DNA replication. Mediates the excision of single ribonucleotides from DNA:RNA duplexes. The polypeptide is Ribonuclease H2 subunit A (Rnaseh2a) (Rattus norvegicus (Rat)).